Consider the following 103-residue polypeptide: UPF0145 protein Amet_0532 (103 aa).

It belongs to the UPF0145 family.

This Alkaliphilus metalliredigens (strain QYMF) protein is UPF0145 protein Amet_0532.